The primary structure comprises 257 residues: Probable enoyl-CoA hydratase echA17 (257 aa).

Belongs to the enoyl-CoA hydratase/isomerase family.

The catalysed reaction is a (3S)-3-hydroxyacyl-CoA = a (2E)-enoyl-CoA + H2O. It catalyses the reaction a 4-saturated-(3S)-3-hydroxyacyl-CoA = a (3E)-enoyl-CoA + H2O. Its function is as follows. Could possibly oxidize fatty acids using specific components. The protein is Probable enoyl-CoA hydratase echA17 (echA17) of Mycolicibacterium paratuberculosis (strain ATCC BAA-968 / K-10) (Mycobacterium paratuberculosis).